We begin with the raw amino-acid sequence, 625 residues long: DNA-directed RNA polymerase subunit gamma (625 aa).

4 residues coordinate Zn(2+): Cys-71, Cys-73, Cys-86, and Cys-89. Mg(2+) contacts are provided by Asp-467, Asp-469, and Asp-471.

It belongs to the RNA polymerase beta' chain family. RpoC1 subfamily. In cyanobacteria the RNAP catalytic core is composed of 2 alpha, 1 beta, 1 beta', 1 gamma and 1 omega subunit. When a sigma factor is associated with the core the holoenzyme is formed, which can initiate transcription. It depends on Mg(2+) as a cofactor. Zn(2+) is required as a cofactor.

The catalysed reaction is RNA(n) + a ribonucleoside 5'-triphosphate = RNA(n+1) + diphosphate. DNA-dependent RNA polymerase catalyzes the transcription of DNA into RNA using the four ribonucleoside triphosphates as substrates. In Gloeothece citriformis (strain PCC 7424) (Cyanothece sp. (strain PCC 7424)), this protein is DNA-directed RNA polymerase subunit gamma.